A 436-amino-acid chain; its full sequence is Probable protein phosphatase 2C 15 (436 aa).

The 273-residue stretch at 30 to 302 (KAAKMEKPIV…DDTTCIVVDI (273 aa)) folds into the PPM-type phosphatase domain. D78, G79, D254, and D293 together coordinate Mn(2+).

This sequence belongs to the PP2C family. Requires Mg(2+) as cofactor. Mn(2+) serves as cofactor.

The enzyme catalyses O-phospho-L-seryl-[protein] + H2O = L-seryl-[protein] + phosphate. The catalysed reaction is O-phospho-L-threonyl-[protein] + H2O = L-threonyl-[protein] + phosphate. The sequence is that of Probable protein phosphatase 2C 15 from Arabidopsis thaliana (Mouse-ear cress).